Reading from the N-terminus, the 548-residue chain is Ran-binding protein 9 (548 aa).

Residues 1-14 (MSSPPLHGLSSGGH) show a composition bias toward low complexity. Positions 1-26 (MSSPPLHGLSSGGHLSRDPPPRSWSP) are disordered. Residues 2–189 (SSPPLHGLSS…VDANFGQSPF (188 aa)) form the B30.2/SPRY domain. The segment covering 15–26 (LSRDPPPRSWSP) has biased composition (basic and acidic residues). Residues 217–249 (WQSMIQRMVSSYLVHHGYCSTAEAFAKSTDQTV) enclose the LisH domain. A CTLH domain is found at 255-312 (SIKNRQRIQKLVLSGRMGEAIETTQQLYPSLLERNPNLLFTLKVRQFIEMVNGTDSEV).

It belongs to the RANBP9/10 family. Identified in the CTLH complex that contains at least MAEA, RMND5A (or alternatively its paralog RMND5B), GID8, WDR26, and RANBP9 and/or RANBP10.

The protein localises to the cytoplasm. It is found in the cell membrane. The protein resides in the nucleus. May act as scaffolding protein, and as adapter protein to couple membrane receptors to intracellular signaling pathways. Acts as a mediator of cell spreading and actin cytoskeleton rearrangement. Core component of the CTLH E3 ubiquitin-protein ligase complex that mediates ubiquitination and subsequent proteasomal degradation of target proteins. The polypeptide is Ran-binding protein 9 (ranbp9) (Xenopus tropicalis (Western clawed frog)).